We begin with the raw amino-acid sequence, 320 residues long: Malate dehydrogenase (320 aa).

NAD(+) is bound by residues 10 to 15 and Asp-34; that span reads GAGMIG. Positions 83 and 89 each coordinate substrate. Residues Asn-96 and 119–121 contribute to the NAD(+) site; that span reads ITN. Substrate-binding residues include Asn-121 and Arg-152. Residue His-176 is the Proton acceptor of the active site.

It belongs to the LDH/MDH superfamily. MDH type 3 family.

It carries out the reaction (S)-malate + NAD(+) = oxaloacetate + NADH + H(+). In terms of biological role, catalyzes the reversible oxidation of malate to oxaloacetate. This is Malate dehydrogenase from Caulobacter sp. (strain K31).